A 383-amino-acid polypeptide reads, in one-letter code: Polyketide synthase 4 (383 aa).

Residue cysteine 164 is the Nucleophile and monoketide coumarate intermediate of the active site.

Belongs to the thiolase-like superfamily. Chalcone/stilbene synthases family. As to quaternary structure, homodimer. As to expression, expressed in fruits.

The catalysed reaction is 4-coumaroyl-CoA + malonyl-CoA + H2O + H(+) = 4-hydroxybenzalacetone + 2 CO2 + 2 CoA. The enzyme catalyses (E)-4-coumaroyl-CoA + 3 malonyl-CoA + 3 H(+) = 2',4,4',6'-tetrahydroxychalcone + 3 CO2 + 4 CoA. Its pathway is secondary metabolite biosynthesis; flavonoid biosynthesis. With respect to regulation, inhibited by glutathione. Its function is as follows. Bifunctional polyketide synthase producing both 4-hydroxybenzalacetone and naringenin chalcone. Can use p-coumaryl-CoA and ferulyl-CoA as substrates. Catalyzes the initial key reaction step in the biosynthesis of phenylbutanoids. In Rubus idaeus (Raspberry), this protein is Polyketide synthase 4 (PKS4).